The following is an 89-amino-acid chain: N.vectensis toxin 7 (89 aa).

A signal peptide spans 1-21 (MASFFKIAVICLVMLVVCSNA). 3 disulfide bridges follow: Cys-44–Cys-77, Cys-46–Cys-69, and Cys-62–Cys-78.

In terms of tissue distribution, expressed in ectodermal gland cells.

Probable toxin. The chain is N.vectensis toxin 7 from Nematostella vectensis (Starlet sea anemone).